Consider the following 635-residue polypeptide: 1-deoxy-D-xylulose-5-phosphate synthase (635 aa).

Thiamine diphosphate-binding positions include H78 and 119–121; that span reads GHA. D151 serves as a coordination point for Mg(2+). Residues 152 to 153, N180, and Y291 contribute to the thiamine diphosphate site; that span reads GA. N180 contributes to the Mg(2+) binding site. The tract at residues 305-325 is disordered; it reads PAFEDRGGTPVTRGSDGRPPY. Thiamine diphosphate is bound at residue E374.

It belongs to the transketolase family. DXPS subfamily. In terms of assembly, homodimer. Mg(2+) is required as a cofactor. The cofactor is thiamine diphosphate.

It catalyses the reaction D-glyceraldehyde 3-phosphate + pyruvate + H(+) = 1-deoxy-D-xylulose 5-phosphate + CO2. The protein operates within metabolic intermediate biosynthesis; 1-deoxy-D-xylulose 5-phosphate biosynthesis; 1-deoxy-D-xylulose 5-phosphate from D-glyceraldehyde 3-phosphate and pyruvate: step 1/1. Its function is as follows. Catalyzes the acyloin condensation reaction between C atoms 2 and 3 of pyruvate and glyceraldehyde 3-phosphate to yield 1-deoxy-D-xylulose-5-phosphate (DXP). This chain is 1-deoxy-D-xylulose-5-phosphate synthase, found in Rhodopirellula baltica (strain DSM 10527 / NCIMB 13988 / SH1).